A 298-amino-acid chain; its full sequence is Mitochondrial 2-oxodicarboxylate carrier (298 aa).

Solcar repeat units lie at residues 10–99 (HETS…YKKF), 106–195 (SPGL…VKNI), and 204–293 (LEFL…TYAW). Helical transmembrane passes span 16 to 36 (VAAG…LDVV), 69 to 88 (FGFY…KRAV), 112 to 132 (LIAG…FEVV), 166 to 186 (GLNK…MVYF), 204 to 224 (LEFL…SVFN), and 276 to 296 (LGPG…WLQE).

It belongs to the mitochondrial carrier (TC 2.A.29) family.

The protein localises to the mitochondrion inner membrane. The catalysed reaction is 2-oxoadipate(in) + 2-oxoglutarate(out) = 2-oxoadipate(out) + 2-oxoglutarate(in). It catalyses the reaction hexanedioate(in) + 2-oxoglutarate(out) = hexanedioate(out) + 2-oxoglutarate(in). It carries out the reaction L-2-aminoadipate(in) + 2-oxoglutarate(out) = L-2-aminoadipate(out) + 2-oxoglutarate(in). The enzyme catalyses glutarate(in) + 2-oxoglutarate(out) = glutarate(out) + 2-oxoglutarate(in). The catalysed reaction is 2-oxoheptanedioate(in) + 2-oxoglutarate(out) = 2-oxoheptanedioate(out) + 2-oxoglutarate(in). It catalyses the reaction heptanedioate(in) + 2-oxoglutarate(out) = heptanedioate(out) + 2-oxoglutarate(in). It carries out the reaction citrate(in) + 2-oxoglutarate(out) = citrate(out) + 2-oxoglutarate(in). Functionally, transports dicarboxylates across the inner membranes of mitochondria by a counter-exchange mechanism. Can transport 2-oxoadipate (2-oxohexanedioate), 2-oxoglutarate, adipate (hexanedioate), glutarate, and to a lesser extent, pimelate (heptanedioate), 2-oxopimelate (2-oxoheptanedioate), 2-aminoadipate (2-aminohexanedioate), oxaloacetate, and citrate. Plays a central role in catabolism of lysine, hydroxylysine, and tryptophan, by transporting common metabolite intermediates (such as 2-oxoadipate) into the mitochondria, where it is converted into acetyl-CoA and can enter the citric acid (TCA) cycle. This chain is Mitochondrial 2-oxodicarboxylate carrier (Slc25a21), found in Mus musculus (Mouse).